Here is a 409-residue protein sequence, read N- to C-terminus: Isovaleryl-CoA dehydrogenase, mitochondrial (409 aa).

The N-terminal 22 residues, 1-22, are a transit peptide targeting the mitochondrion; sequence MAAAQRWLPGILRRGDGLARRL. FAD contacts are provided by residues 151 to 160 and 184 to 186; these read LAMSEPNSGS and WCT. S160 contacts substrate. Substrate-binding positions include 206 to 207, Y261, and 268 to 271; these read SK and DLER. Residue E270 is the Proton acceptor of the active site. Residues R296, Q307, and 364 to 368 contribute to the FAD site; that span reads QCLGG. Position 391–392 (391–392) interacts with substrate; sequence AG. FAD is bound at residue 393–395; that stretch reads TSE.

It belongs to the acyl-CoA dehydrogenase family. As to quaternary structure, homodimer. Requires FAD as cofactor.

Its subcellular location is the mitochondrion. It carries out the reaction 3-methylbutanoyl-CoA + oxidized [electron-transfer flavoprotein] + H(+) = 3-methylbut-2-enoyl-CoA + reduced [electron-transfer flavoprotein]. The protein operates within amino-acid degradation; L-leucine degradation; (S)-3-hydroxy-3-methylglutaryl-CoA from 3-isovaleryl-CoA: step 1/3. The sequence is that of Isovaleryl-CoA dehydrogenase, mitochondrial from Oryza sativa subsp. japonica (Rice).